A 90-amino-acid chain; its full sequence is Serine protease inhibitor kazal-like protein, minor form (90 aa).

An N-terminal signal peptide occupies residues 1 to 23 (MSSTWIKFLFILTLVLLPYSVFS). In terms of domain architecture, Kazal-like spans 33–89 (VIKEPNCTMYKSKSECSNIAENPVCADDRNTYYNECYFCIEKVVEKLKYRYHGICIY). Asn38 carries N-linked (GlcNAc...) asparagine glycosylation.

In terms of tissue distribution, luminal fluid and mucosal folds of the seminal vesicles (at protein level). Not detected in brain, heart, lung, liver, kidney, stomach, small intestine, muscle, skin, thymus, placenta or bladder.

It localises to the secreted. Does not function as an inhibitor of trypsin, chymotrypsin, subtilisin or elastase. Binds sperm and enhances sperm motility. May act as a decapacitation factor, suppresses BSA-stimulated sperm capacitation and blocks sperm-oocyte interactions in vitro. The protein is Serine protease inhibitor kazal-like protein, minor form (Spinkl) of Mus musculus (Mouse).